Consider the following 1325-residue polypeptide: NHS-like protein 3 (1325 aa).

A coiled-coil region spans residues 53 to 85; the sequence is LEDLHTEAQEGLKILQQEEEDTSSKERNESLEN. 10 disordered regions span residues 68 to 92, 111 to 131, 291 to 348, 368 to 570, 595 to 614, 829 to 891, 935 to 981, 1084 to 1138, 1243 to 1272, and 1293 to 1313; these read QQEE…SGHS, QGST…KRRS, CSAS…KGKC, MSVS…AKTS, QTNT…TTVK, EVNG…MEES, LLST…VSEF, VGED…SSAV, GTKK…ENAT, and SDQV…EQAS. Over residues 296–334 the composition is skewed to low complexity; the sequence is ASKGSMASASPSSSRSGSGTNQAPPTTSPSRSNSQSSET. The segment covering 335–344 has biased composition (polar residues); sequence IVSNSSTISS. Residues 369–378 show a composition bias toward low complexity; sequence SVSSSSSWKS. Over residues 400–412 the composition is skewed to polar residues; it reads VRNSHSFSRSLSV. The segment covering 428–447 has biased composition (basic and acidic residues); it reads LHHENMQRQREQGDIQDPKD. The span at 450-460 shows a compositional bias: polar residues; the sequence is PNNNEQTNRDI. Basic and acidic residues predominate over residues 515 to 524; it reads KTRECGENFD. Residues 528–541 are compositionally biased toward low complexity; it reads SPSSGYSSQSGTPT. A compositionally biased stretch (pro residues) spans 834–850; sequence SPPPSPPPEHHPPPPPI. Polar residues-rich tracts occupy residues 935-948 and 1088-1100; these read LLST…SSPE and QVNN…TEPT. The span at 1124–1138 shows a compositional bias: low complexity; it reads KSNSPAKSSSASSAV. The segment covering 1302 to 1311 has biased composition (polar residues); it reads RAQSLGNQEQ.

Its function is as follows. Able to directly activate the TNF-NFkappaB signaling pathway. This is NHS-like protein 3 (nhsl3) from Danio rerio (Zebrafish).